The chain runs to 192 residues: MVSMFWLLATFAYLLGSLSFAILLSRLSGSPDPRASGSGNAGATNMLRLAGKKLAVLTLLGDLCKGLIPVVLAGAWGLDPSQQGWIGVCAVLGHLFPLYFRFRGGKGVATAAGVLLGLYPPAAALAIAAWLLTLYLTRTSSLAALIATPLTLPLLAWQEPHALLPMSVLTLLIVWRHRGNLRDLLAGRERHF.

Helical transmembrane passes span 4-24 (MFWL…AILL), 54-74 (LAVL…VLAG), 80-100 (PSQQ…PLYF), 112-132 (AGVL…AWLL), and 154-174 (LLAW…LLIV).

This sequence belongs to the PlsY family. In terms of assembly, probably interacts with PlsX.

It is found in the cell inner membrane. The catalysed reaction is an acyl phosphate + sn-glycerol 3-phosphate = a 1-acyl-sn-glycero-3-phosphate + phosphate. It participates in lipid metabolism; phospholipid metabolism. Its function is as follows. Catalyzes the transfer of an acyl group from acyl-phosphate (acyl-PO(4)) to glycerol-3-phosphate (G3P) to form lysophosphatidic acid (LPA). This enzyme utilizes acyl-phosphate as fatty acyl donor, but not acyl-CoA or acyl-ACP. This chain is Glycerol-3-phosphate acyltransferase, found in Pseudomonas syringae pv. tomato (strain ATCC BAA-871 / DC3000).